The sequence spans 61 residues: Large ribosomal subunit protein bL32 (61 aa).

Residues 1-16 (MAVPRRKTSPSRRGMR) show a composition bias toward basic residues. Positions 1–61 (MAVPRRKTSP…RQVLKAKSDS (61 aa)) are disordered. Positions 27–44 (YAEDKDSGELRRPHHLDL) are enriched in basic and acidic residues.

The protein belongs to the bacterial ribosomal protein bL32 family.

The polypeptide is Large ribosomal subunit protein bL32 (Nitrobacter winogradskyi (strain ATCC 25391 / DSM 10237 / CIP 104748 / NCIMB 11846 / Nb-255)).